The following is a 431-amino-acid chain: Transcription factor Sp7 (431 aa).

Positions 30–56 (SSPLRDSTTLGKAGTKKPYSVGSDLSA) are disordered. 2 positions are modified to N6-propionyllysine: lysine 41 and lysine 45. Lysine 58 participates in a covalent cross-link: Glycyl lysine isopeptide (Lys-Gly) (interchain with G-Cter in ubiquitin). 2 disordered regions span residues 71–115 (TNGL…VPKG) and 154–260 (TPTP…SGGY). The short motif at 156–164 (TPWWDMHPG) is the 9aaTAD element. Over residues 166-178 (NWLGGGQGQGDGL) the composition is skewed to gly residues. Lysine 230 participates in a covalent cross-link: Glycyl lysine isopeptide (Lys-Gly) (interchain with G-Cter in ubiquitin). 3 C2H2-type zinc fingers span residues 294 to 318 (HSCH…LRWH), 324 to 348 (FVCN…VRTH), and 354 to 376 (FTCL…QRTH). Lysine 361 and lysine 371 each carry N6-propionyllysine. The segment at 367–431 (DHLSKHQRTH…SPEQSNLLEI (65 aa)) is disordered. A compositionally biased stretch (polar residues) spans 403–412 (SQTPRPSASP).

Belongs to the Sp1 C2H2-type zinc-finger protein family. As to quaternary structure, interacts with RIOX1; the interaction is direct and inhibits transcription activator activity. Ubiquitination at leads to proteasomal degradation. SP7 is a short-live protein with an endogenous half-life of approximately 12 hours. Post-translationally, propionylated. Depropionylation at Lys-371 by SIRT7 activates transcription factor activity and positively regulates bone formation by osteoblasts. As to expression, restricted to bone-derived cell.

Its subcellular location is the nucleus. Transcriptional activator essential for osteoblast differentiation. Binds to SP1 and EKLF consensus sequences and to other G/C-rich sequences. The sequence is that of Transcription factor Sp7 (SP7) from Homo sapiens (Human).